We begin with the raw amino-acid sequence, 207 residues long: Dephospho-CoA kinase (207 aa).

Residues 11–207 (RIGLTGGIAS…LLKMSPTAEL (197 aa)) form the DPCK domain. 19 to 24 (ASGKSS) serves as a coordination point for ATP.

The protein belongs to the CoaE family.

It is found in the cytoplasm. It catalyses the reaction 3'-dephospho-CoA + ATP = ADP + CoA + H(+). It functions in the pathway cofactor biosynthesis; coenzyme A biosynthesis; CoA from (R)-pantothenate: step 5/5. Its function is as follows. Catalyzes the phosphorylation of the 3'-hydroxyl group of dephosphocoenzyme A to form coenzyme A. The protein is Dephospho-CoA kinase of Synechococcus sp. (strain CC9605).